We begin with the raw amino-acid sequence, 74 residues long: uncharacterized protein (74 aa).

This is an uncharacterized protein from Staphylococcus aureus.